Reading from the N-terminus, the 268-residue chain is Speedy protein E4A (268 aa).

Disordered regions lie at residues 1-26 and 43-97; these read MGEG…LGFV and LCSE…LDSE. Polar residues predominate over residues 43–52; it reads LCSEEQSPQP. The segment at 134–265 is speedy/Ringo box; Required for CDK-binding; sequence PEHHKVFTKL…DLWVWARDRT (132 aa).

This sequence belongs to the Speedy/Ringo family. In terms of assembly, interacts with CDK1. Does not interact with CDK2 in vivo. As to expression, testis-specific.

Its subcellular location is the nucleus. Functionally, promotes progression through the cell cycle via binding and activation of CDK1. The protein is Speedy protein E4A of Mus musculus (Mouse).